A 223-amino-acid chain; its full sequence is Chorismate dehydratase (223 aa).

This sequence belongs to the MqnA/MqnD family. MqnA subfamily.

It carries out the reaction chorismate = 3-[(1-carboxyvinyl)-oxy]benzoate + H2O. The protein operates within quinol/quinone metabolism; menaquinone biosynthesis. Catalyzes the dehydration of chorismate into 3-[(1-carboxyvinyl)oxy]benzoate, a step in the biosynthesis of menaquinone (MK, vitamin K2). In Campylobacter jejuni subsp. jejuni serotype O:23/36 (strain 81-176), this protein is Chorismate dehydratase.